The following is a 693-amino-acid chain: Polyribonucleotide nucleotidyltransferase (693 aa).

Asp489 and Asp495 together coordinate Mg(2+). In terms of domain architecture, KH spans Pro556–Ile615. In terms of domain architecture, S1 motif spans Gly625–Arg693.

It belongs to the polyribonucleotide nucleotidyltransferase family. Component of the RNA degradosome, which is a multiprotein complex involved in RNA processing and mRNA degradation. The cofactor is Mg(2+).

The protein localises to the cytoplasm. It catalyses the reaction RNA(n+1) + phosphate = RNA(n) + a ribonucleoside 5'-diphosphate. Functionally, involved in mRNA degradation. Catalyzes the phosphorolysis of single-stranded polyribonucleotides processively in the 3'- to 5'-direction. In Francisella tularensis subsp. novicida (strain U112), this protein is Polyribonucleotide nucleotidyltransferase.